The following is a 498-amino-acid chain: ATP synthase subunit beta, chloroplastic (498 aa).

Residue 172–179 (GGAGVGKT) participates in ATP binding.

It belongs to the ATPase alpha/beta chains family. F-type ATPases have 2 components, CF(1) - the catalytic core - and CF(0) - the membrane proton channel. CF(1) has five subunits: alpha(3), beta(3), gamma(1), delta(1), epsilon(1). CF(0) has four main subunits: a(1), b(1), b'(1) and c(9-12).

Its subcellular location is the plastid. The protein localises to the chloroplast thylakoid membrane. It catalyses the reaction ATP + H2O + 4 H(+)(in) = ADP + phosphate + 5 H(+)(out). Produces ATP from ADP in the presence of a proton gradient across the membrane. The catalytic sites are hosted primarily by the beta subunits. This Populus alba (White poplar) protein is ATP synthase subunit beta, chloroplastic.